The sequence spans 126 residues: UPF0102 protein Mlg_2205 (126 aa).

The protein belongs to the UPF0102 family.

The polypeptide is UPF0102 protein Mlg_2205 (Alkalilimnicola ehrlichii (strain ATCC BAA-1101 / DSM 17681 / MLHE-1)).